A 355-amino-acid chain; its full sequence is UDP-N-acetylglucosamine--N-acetylmuramyl-(pentapeptide) pyrophosphoryl-undecaprenol N-acetylglucosamine transferase (355 aa).

Residues threonine 15–glycine 17, asparagine 127, arginine 163, serine 191, isoleucine 244, alanine 263–glutamate 268, and glutamine 288 contribute to the UDP-N-acetyl-alpha-D-glucosamine site.

The protein belongs to the glycosyltransferase 28 family. MurG subfamily.

It is found in the cell inner membrane. It catalyses the reaction di-trans,octa-cis-undecaprenyl diphospho-N-acetyl-alpha-D-muramoyl-L-alanyl-D-glutamyl-meso-2,6-diaminopimeloyl-D-alanyl-D-alanine + UDP-N-acetyl-alpha-D-glucosamine = di-trans,octa-cis-undecaprenyl diphospho-[N-acetyl-alpha-D-glucosaminyl-(1-&gt;4)]-N-acetyl-alpha-D-muramoyl-L-alanyl-D-glutamyl-meso-2,6-diaminopimeloyl-D-alanyl-D-alanine + UDP + H(+). It functions in the pathway cell wall biogenesis; peptidoglycan biosynthesis. In terms of biological role, cell wall formation. Catalyzes the transfer of a GlcNAc subunit on undecaprenyl-pyrophosphoryl-MurNAc-pentapeptide (lipid intermediate I) to form undecaprenyl-pyrophosphoryl-MurNAc-(pentapeptide)GlcNAc (lipid intermediate II). This chain is UDP-N-acetylglucosamine--N-acetylmuramyl-(pentapeptide) pyrophosphoryl-undecaprenol N-acetylglucosamine transferase, found in Salmonella paratyphi B (strain ATCC BAA-1250 / SPB7).